The chain runs to 565 residues: NAD-dependent malic enzyme (565 aa).

Tyr104 serves as the catalytic Proton donor. Arg157 provides a ligand contact to NAD(+). The active-site Proton acceptor is Lys175. Glu246, Asp247, and Asp270 together coordinate a divalent metal cation. NAD(+) is bound by residues Asp270 and Asn418.

The protein belongs to the malic enzymes family. As to quaternary structure, homotetramer. Mg(2+) serves as cofactor. Mn(2+) is required as a cofactor.

It carries out the reaction (S)-malate + NAD(+) = pyruvate + CO2 + NADH. It catalyses the reaction oxaloacetate + H(+) = pyruvate + CO2. This Salmonella newport (strain SL254) protein is NAD-dependent malic enzyme.